Reading from the N-terminus, the 259-residue chain is HTH-type transcriptional regulator Rv1719 (259 aa).

One can recognise an HTH iclR-type domain in the interval 13 to 75; sequence IQVIARAAEL…GARGPYRLGP (63 aa). A DNA-binding region (H-T-H motif) is located at residues 35–54; that stretch reads QAEIGERVGMARSTVSRILN. Positions 88 to 259 constitute an IclR-ED domain; that stretch reads VVTEMHPFLT…AWFNGTEDRK (172 aa).

In terms of assembly, homodimer.

In terms of biological role, binds to the upstream region of Rv1714 and probably modulates the expression of the downstream gene(s). This is HTH-type transcriptional regulator Rv1719 from Mycobacterium tuberculosis (strain ATCC 25618 / H37Rv).